Reading from the N-terminus, the 483-residue chain is Zinc metalloproteinase/disintegrin VMP-II (483 aa).

An N-terminal signal peptide occupies residues methionine 1 to serine 20. Positions isoleucine 21–glutamate 191 are excised as a propeptide. The Peptidase M12B domain maps to arginine 198–proline 394. Residues glutamate 201 and aspartate 285 each contribute to the Ca(2+) site. 3 disulfide bridges follow: cysteine 309/cysteine 389, cysteine 349/cysteine 373, and cysteine 351/cysteine 356. Histidine 334 contacts Zn(2+). Residue glutamate 335 is part of the active site. Histidine 338 and histidine 344 together coordinate Zn(2+). Residues cysteine 389 and asparagine 392 each coordinate Ca(2+). A propeptide spanning residues leucine 395–glutamate 414 is cleaved from the precursor. A Disintegrin domain is found at threonine 402–alanine 483. Intrachain disulfides connect cysteine 425–cysteine 448, cysteine 439–cysteine 445, cysteine 444–cysteine 469, and cysteine 457–cysteine 476. The Cell attachment site; atypical (KGD) motif lies at lysine 461–aspartate 463.

It belongs to the venom metalloproteinase (M12B) family. P-II subfamily. P-IIe sub-subfamily. As to quaternary structure, heterodimer; disulfide-linked (disintegrin). Zn(2+) serves as cofactor. In terms of tissue distribution, expressed by the venom gland.

The protein resides in the secreted. With respect to regulation, inhibited by EDTA and 1,10-phenanthroline, but not by PMSF. Has fibrinolytic activity. The recombinant enzyme cleaves both alpha- (FGA) and beta-chains (FGB) of fibrinogen, but not the gamma-chain. The recombinant protein does not produce hemorrhage in mice and does not have effect on ADP- or collagen-stimulated platelet aggregation. Its function is as follows. Inhibits platelet aggregation induced by ADP, thrombin, platelet-activating factor and collagen. Acts by inhibiting fibrinogen interaction with platelet receptors GPIIb/GPIIIa (ITGA2B/ITGB3). In Agkistrodon piscivorus leucostoma (Western cottonmouth), this protein is Zinc metalloproteinase/disintegrin VMP-II.